The following is a 325-amino-acid chain: Elongation factor P--(R)-beta-lysine ligase (325 aa).

76–78 serves as a coordination point for substrate; that stretch reads SPE. ATP contacts are provided by residues 100 to 102 and asparagine 109; that span reads RNE. Tyrosine 118 contributes to the substrate binding site. Residue 244-245 participates in ATP binding; it reads EL. Position 251 (glutamate 251) interacts with substrate. Residue glycine 300 coordinates ATP.

The protein belongs to the class-II aminoacyl-tRNA synthetase family. EpmA subfamily. In terms of assembly, homodimer.

It carries out the reaction D-beta-lysine + L-lysyl-[protein] + ATP = N(6)-((3R)-3,6-diaminohexanoyl)-L-lysyl-[protein] + AMP + diphosphate + H(+). Functionally, with EpmB is involved in the beta-lysylation step of the post-translational modification of translation elongation factor P (EF-P) on 'Lys-34'. Catalyzes the ATP-dependent activation of (R)-beta-lysine produced by EpmB, forming a lysyl-adenylate, from which the beta-lysyl moiety is then transferred to the epsilon-amino group of EF-P 'Lys-34'. This chain is Elongation factor P--(R)-beta-lysine ligase, found in Escherichia fergusonii (strain ATCC 35469 / DSM 13698 / CCUG 18766 / IAM 14443 / JCM 21226 / LMG 7866 / NBRC 102419 / NCTC 12128 / CDC 0568-73).